A 340-amino-acid polypeptide reads, in one-letter code: MHNTDVVIIGAGPVGLFAVFQAGMLGMKCHVIDAQEVIGGQCITLYPEKPIYDIPAYPKIVAEELIKQLALQAAPFNPIYHLNQQAIELNKQDDFFEIKTSKNTLIKSKVIIIAAGAGSFGPNKPPLANIEDFESKSVFYFINDKSKFAGKNIVIAGGGDSAVDWAISLSDIANKIYLVHRRDKFTAAPESVRQLRHIAETDKIELITGYQLNALDGNNSELQSVIVKDLQNNTRKLDANILLPFFGLKQDLGSLANWGLNVKLHHIEVDSSYYQTNIEGIYAIGDIAHYVGKLKLILTGFAEAASSLHHAYSRVFDGKALHFEYSTTKNTGKRSKSVTK.

FAD-binding residues include Asp-33, Gln-41, Tyr-46, Ala-86, Phe-120, Asp-286, and Thr-327.

This sequence belongs to the ferredoxin--NADP reductase type 2 family. In terms of assembly, homodimer. FAD serves as cofactor.

The catalysed reaction is 2 reduced [2Fe-2S]-[ferredoxin] + NADP(+) + H(+) = 2 oxidized [2Fe-2S]-[ferredoxin] + NADPH. This chain is Ferredoxin--NADP reductase, found in Rickettsia rickettsii (strain Sheila Smith).